The sequence spans 255 residues: Triosephosphate isomerase (255 aa).

10-12 lines the substrate pocket; the sequence is NWK. The active-site Electrophile is histidine 96. The active-site Proton acceptor is the glutamate 169. Residues glycine 175, serine 214, and 235-236 each bind substrate; that span reads GG.

Belongs to the triosephosphate isomerase family. In terms of assembly, homodimer.

It is found in the cytoplasm. The catalysed reaction is D-glyceraldehyde 3-phosphate = dihydroxyacetone phosphate. The protein operates within carbohydrate biosynthesis; gluconeogenesis. It participates in carbohydrate degradation; glycolysis; D-glyceraldehyde 3-phosphate from glycerone phosphate: step 1/1. Its function is as follows. Involved in the gluconeogenesis. Catalyzes stereospecifically the conversion of dihydroxyacetone phosphate (DHAP) to D-glyceraldehyde-3-phosphate (G3P). The chain is Triosephosphate isomerase from Coxiella burnetii (strain Dugway 5J108-111).